We begin with the raw amino-acid sequence, 370 residues long: Phosphate acyltransferase (370 aa).

The disordered stretch occupies residues 349-370 (SAGRAGQDAPDEMAAPGRSEKR).

It belongs to the PlsX family. In terms of assembly, homodimer. Probably interacts with PlsY.

Its subcellular location is the cytoplasm. The enzyme catalyses a fatty acyl-[ACP] + phosphate = an acyl phosphate + holo-[ACP]. It functions in the pathway lipid metabolism; phospholipid metabolism. Catalyzes the reversible formation of acyl-phosphate (acyl-PO(4)) from acyl-[acyl-carrier-protein] (acyl-ACP). This enzyme utilizes acyl-ACP as fatty acyl donor, but not acyl-CoA. The polypeptide is Phosphate acyltransferase (Cereibacter sphaeroides (strain ATCC 17029 / ATH 2.4.9) (Rhodobacter sphaeroides)).